The primary structure comprises 925 residues: MGSGPIDPKELLKGLDSFLNRDGEVKSVDGISKIFSLMKEARKMVSRCTYLNILLQTRSPEILVKFIDVGGYKLLNNWLTYSKTTNNIPLLQQILLTLQHLPLTVDHLKQNNTAKLVKQLSKSSEDEELRKLASVLVSDWMAVIRSQSSTQPAEKDKKKRKEEGKSRTTPPERPLTEVKAETRAEEAPEKKREKPKSLRTTAPSHAKFRSTGLELETPSLVPVKKNASAVVVSDKYNLKPIPLKRQSSIAALGDAAPPAEKKYKPLNTTPNATKEIKVKIIPPQPMEGLGFLDALNSAPVPGIKIKKKKKVLSPTAAKPSPFEGKTSTEPSTAKPSSPEPAPPSEAMDTDRPGTPVPPVEVPELMDTASLEPGALDAKPVESPGDPSQLTRKGRKRKTVTWPEEGKLREYFYFELDETERVNVNKIKDFGEAAKREILSDRHAFETARRLSHDNMEEKVPWVCPRPLVLPSPLVTPGSNSQERYIQAEREKGILQELFLNKESPHEPDPEPYEPVPPKLIPLDEECSMDETPYVETLEPGGAGGSPDGAGGSKLPPVLANLMGSMGAGKSPQGPGGGGINVQEILTSIMGSPNSHPSEELLKQPDYSDKIKQMLVPHGLLGPGPIANGFPPGGPGGPKGMQHFPPGPGGPMPGPHGGPGGPGGPVGPRLLGPPPPPRGGDPFWDGPGDPMRGGPMRGGPGPGPGPYHRGRGGRGGNEPPPPPPPFRGARGGRSGGGPPNGRGGPGGGMVGGGGHRPHEGPGGGMSSGSGHRPHEGPGGGMGGGHRPHEGPGGGMGGGHRPHEGPGGGMGGGSGHRPHEGPGGGMGAGGGHRPHEGPGHGGPHGHRPHDVPGHRGHDHRGPPPHEHRGHDGPGHGGGGHRGHDGGHNHGGDMSKRPVCRHFMMKGNCRYENNCAFYHPGVNGPPLP.

The interval 1 to 348 (MGSGPIDPKE…EPAPPSEAMD (348 aa)) is interaction with TOX4. In terms of domain architecture, TFIIS N-terminal spans 73 to 147 (KLLNNWLTYS…SDWMAVIRSQ (75 aa)). The disordered stretch occupies residues 147–211 (QSSTQPAEKD…APSHAKFRST (65 aa)). 2 stretches are compositionally biased toward basic and acidic residues: residues 153–166 (AEKD…EGKS) and 174–196 (PLTE…EKPK). Glycyl lysine isopeptide (Lys-Gly) (interchain with G-Cter in SUMO2) cross-links involve residues Lys179 and Lys262. 3 disordered regions span residues 304–398 (KIKK…KRKT), 536–555 (TLEP…SKLP), and 587–890 (SIMG…HGGD). Ser313 is subject to Phosphoserine. Positions 325–336 (KTSTEPSTAKPS) are enriched in low complexity. Residues 357 to 433 (PPVEVPELMD…NKIKDFGEAA (77 aa)) form a necessary for interaction with PPP1CA region. Ser382 is subject to Phosphoserine. The tract at residues 393-408 (GRKRKTVTWPEEGKLR) is necessary for interaction with PPP1CC. Positions 394–423 (RKRKTVTWPEEGKLREYFYFELDETERVNV) match the PP1-binding motif motif. Position 398 is a phosphothreonine; by PKA (Thr398). The segment at 418 to 619 (TERVNVNKIK…IKQMLVPHGL (202 aa)) is interaction with WDR82. Over residues 540 to 551 (GGAGGSPDGAGG) the composition is skewed to gly residues. Residues Ser545 and Ser591 each carry the phosphoserine modification. A compositionally biased stretch (basic and acidic residues) spans 596 to 611 (PSEELLKQPDYSDKIK). Over residues 644-655 (PPGPGGPMPGPH) the composition is skewed to pro residues. A compositionally biased stretch (gly residues) spans 656 to 665 (GGPGGPGGPV). An Omega-N-methylarginine modification is found at Arg668. Residues 679 to 693 (GDPFWDGPGDPMRGG) are compositionally biased toward low complexity. Arg696 and Arg741 each carry omega-N-methylarginine. Gly residues-rich tracts occupy residues 728 to 766 (ARGG…GMSS) and 775 to 829 (GPGG…AGGG). Basic and acidic residues-rich tracts occupy residues 846–871 (PHDV…HDGP) and 879–890 (RGHDGGHNHGGD). Residues 891–919 (MSKRPVCRHFMMKGNCRYENNCAFYHPGV) form a C3H1-type zinc finger.

As to quaternary structure, component of the PNUTS-PP1 complex (also named PTW/PP1 complex), composed of PPP1R10/PNUTS, TOX4, WDR82, and PPP1CA (or PPP1CB or PPP1CC). Phosphorylated on Ser-398 by PKA within the region necessary for interaction with PPP1CA.

The protein localises to the nucleus. The protein resides in the chromosome. Functionally, substrate-recognition component of the PNUTS-PP1 protein phosphatase complex, a protein phosphatase 1 (PP1) complex that promotes RNA polymerase II transcription pause-release, allowing transcription elongation. Promoter-proximal pausing by RNA polymerase II is a transcription halt following transcription initiation but prior to elongation, which acts as a checkpoint to control that transcripts are favorably configured for transcriptional elongation. The PNUTS-PP1 complex mediates the release of RNA polymerase II from promoter-proximal region of genes by catalyzing dephosphorylation of proteins involved in transcription, such as AFF4, CDK9, MEPCE, INTS12, NCBP1, POLR2M/GDOWN1 and SUPT6H. The PNUTS-PP1 complex also regulates RNA polymerase II transcription termination by mediating dephosphorylation of SUPT5H in termination zones downstream of poly(A) sites, thereby promoting deceleration of RNA polymerase II transcription. PNUTS-PP1 complex is also involved in the response to replication stress by mediating dephosphorylation of POLR2A at 'Ser-5' of the CTD, promoting RNA polymerase II degradation. The PNUTS-PP1 complex also plays a role in the control of chromatin structure and cell cycle progression during the transition from mitosis into interphase. PNUTS-PP1 complex mediates dephosphorylation of MYC, promoting MYC stability by preventing MYC ubiquitination by the SCF(FBXW7) complex. In addition to acts as a substrate-recognition component, PPP1R10/PNUTS also acts as a nuclear targeting subunit for the PNUTS-PP1 complex. In some context, PPP1R10/PNUTS also acts as an inhibitor of protein phosphatase 1 (PP1) activity by preventing access to substrates, such as RB. The chain is Serine/threonine-protein phosphatase 1 regulatory subunit 10 (PPP1R10) from Sus scrofa (Pig).